A 345-amino-acid chain; its full sequence is Delta(1)-pyrroline-2-carboxylate reductase (345 aa).

Ser-47 (charge relay system) is an active-site residue. The active-site Proton donor is the His-48. Arg-52 provides a ligand contact to substrate. Residue 121-125 (HFSAL) coordinates NADP(+). Thr-161 is a binding site for substrate. 179–181 (DFA) contributes to the NADP(+) binding site. Substrate is bound at residue 187–188 (RG). The active-site Charge relay system is the Glu-189. Residues 230-231 (HK) and 305-311 (RLPSGRR) each bind NADP(+).

The protein belongs to the LDH2/MDH2 oxidoreductase family. In terms of assembly, homodimer.

It catalyses the reaction L-proline + NAD(+) = 1-pyrroline-2-carboxylate + NADH + H(+). The enzyme catalyses L-proline + NADP(+) = 1-pyrroline-2-carboxylate + NADPH + H(+). In terms of biological role, catalyzes the reduction of Delta(1)-pyrroline-2-carboxylate (Pyr2C) to L-proline, using NADPH as the electron donor. Is likely involved in a degradation pathway that converts trans-3-hydroxy-L-proline (t3LHyp) to L-proline, which would allow A.tumefaciens to grow on t3LHyp as a sole carbon source. This Agrobacterium fabrum (strain C58 / ATCC 33970) (Agrobacterium tumefaciens (strain C58)) protein is Delta(1)-pyrroline-2-carboxylate reductase.